A 134-amino-acid polypeptide reads, in one-letter code: MSWQAYVDDHLMCDIEDHEGHRLTAAAIVGHDGSVWAQSATFPQFKPEEMNGIMTDFNEPGHLAPTGLHLGGTKYMVIQGEAGAVIRGKKGSGGITIKKTGQALVFGIYEEPVTPGQCNMVVKRLGDYLLEQGL.

Residues C13 and C118 are joined by a disulfide bond. The Involved in PIP2 interaction signature appears at 84-100 (AVIRGKKGSGGITIKKT). At T114 the chain carries Phosphothreonine.

The protein belongs to the profilin family. As to quaternary structure, occurs in many kinds of cells as a complex with monomeric actin in a 1:1 ratio. In terms of processing, phosphorylated by MAP kinases.

Its subcellular location is the cytoplasm. The protein localises to the cytoskeleton. Binds to actin and affects the structure of the cytoskeleton. At high concentrations, profilin prevents the polymerization of actin, whereas it enhances it at low concentrations. This chain is Profilin-2, found in Olea europaea (Common olive).